The following is a 116-amino-acid chain: Large ribosomal subunit protein uL18 (116 aa).

The protein belongs to the universal ribosomal protein uL18 family. In terms of assembly, part of the 50S ribosomal subunit; part of the 5S rRNA/L5/L18/L25 subcomplex. Contacts the 5S and 23S rRNAs.

This is one of the proteins that bind and probably mediate the attachment of the 5S RNA into the large ribosomal subunit, where it forms part of the central protuberance. The protein is Large ribosomal subunit protein uL18 of Hahella chejuensis (strain KCTC 2396).